The sequence spans 445 residues: Xylose isomerase (445 aa).

Active-site residues include His109 and Asp112. Mg(2+) contacts are provided by Glu240, Glu276, His279, Asp304, Asp315, Asp317, and Asp347.

The protein belongs to the xylose isomerase family. In terms of assembly, homotetramer. Mg(2+) serves as cofactor.

Its subcellular location is the cytoplasm. The enzyme catalyses alpha-D-xylose = alpha-D-xylulofuranose. This is Xylose isomerase from Xanthomonas oryzae pv. oryzae (strain MAFF 311018).